A 303-amino-acid chain; its full sequence is Acetaldehyde dehydrogenase (303 aa).

Cys130 serves as the catalytic Acyl-thioester intermediate. NAD(+) contacts are provided by residues 161 to 169 (SVGPGTRKN) and Asn272.

The protein belongs to the acetaldehyde dehydrogenase family.

It catalyses the reaction acetaldehyde + NAD(+) + CoA = acetyl-CoA + NADH + H(+). This is Acetaldehyde dehydrogenase from Verminephrobacter eiseniae (strain EF01-2).